We begin with the raw amino-acid sequence, 241 residues long: tRNA pseudouridine synthase A (241 aa).

D52 serves as the catalytic Nucleophile. Y110 serves as a coordination point for substrate.

The protein belongs to the tRNA pseudouridine synthase TruA family. Homodimer.

It catalyses the reaction uridine(38/39/40) in tRNA = pseudouridine(38/39/40) in tRNA. Functionally, formation of pseudouridine at positions 38, 39 and 40 in the anticodon stem and loop of transfer RNAs. This Aquifex aeolicus (strain VF5) protein is tRNA pseudouridine synthase A.